The chain runs to 273 residues: 2,3,4,5-tetrahydropyridine-2,6-dicarboxylate N-succinyltransferase (273 aa).

Residues R104 and D141 each contribute to the substrate site.

It belongs to the transferase hexapeptide repeat family. As to quaternary structure, homotrimer.

Its subcellular location is the cytoplasm. It catalyses the reaction (S)-2,3,4,5-tetrahydrodipicolinate + succinyl-CoA + H2O = (S)-2-succinylamino-6-oxoheptanedioate + CoA. Its pathway is amino-acid biosynthesis; L-lysine biosynthesis via DAP pathway; LL-2,6-diaminopimelate from (S)-tetrahydrodipicolinate (succinylase route): step 1/3. The sequence is that of 2,3,4,5-tetrahydropyridine-2,6-dicarboxylate N-succinyltransferase from Thioalkalivibrio sulfidiphilus (strain HL-EbGR7).